The sequence spans 325 residues: Zinc-type alcohol dehydrogenase-like protein C337.11 (325 aa).

Belongs to the zinc-containing alcohol dehydrogenase family. Quinone oxidoreductase subfamily.

The protein resides in the cytoplasm. Its subcellular location is the nucleus. In Schizosaccharomyces pombe (strain 972 / ATCC 24843) (Fission yeast), this protein is Zinc-type alcohol dehydrogenase-like protein C337.11.